We begin with the raw amino-acid sequence, 218 residues long: 3,4-dihydroxy-2-butanone 4-phosphate synthase (218 aa).

D-ribulose 5-phosphate contacts are provided by residues 38–39 (RE), Asp-43, 151–155 (RRGHT), and Glu-175. Glu-39 lines the Mg(2+) pocket. His-154 serves as a coordination point for Mg(2+).

Belongs to the DHBP synthase family. In terms of assembly, homodimer. Requires Mg(2+) as cofactor. It depends on Mn(2+) as a cofactor.

It catalyses the reaction D-ribulose 5-phosphate = (2S)-2-hydroxy-3-oxobutyl phosphate + formate + H(+). It functions in the pathway cofactor biosynthesis; riboflavin biosynthesis; 2-hydroxy-3-oxobutyl phosphate from D-ribulose 5-phosphate: step 1/1. In terms of biological role, catalyzes the conversion of D-ribulose 5-phosphate to formate and 3,4-dihydroxy-2-butanone 4-phosphate. This Vibrio cholerae serotype O1 (strain M66-2) protein is 3,4-dihydroxy-2-butanone 4-phosphate synthase.